A 129-amino-acid polypeptide reads, in one-letter code: Glycine cleavage system H protein (129 aa).

Residues 23–104 (SVTVGITQHA…CYAAWLFKLK (82 aa)) form the Lipoyl-binding domain. Lysine 64 carries the N6-lipoyllysine modification.

Belongs to the GcvH family. In terms of assembly, the glycine cleavage system is composed of four proteins: P, T, L and H. (R)-lipoate is required as a cofactor.

Its function is as follows. The glycine cleavage system catalyzes the degradation of glycine. The H protein shuttles the methylamine group of glycine from the P protein to the T protein. This Nitrosomonas europaea (strain ATCC 19718 / CIP 103999 / KCTC 2705 / NBRC 14298) protein is Glycine cleavage system H protein.